Reading from the N-terminus, the 942-residue chain is AP-1 complex subunit beta (942 aa).

6 HEAT repeats span residues 45–82, 117–154, 156–193, 273–313, 384–421, and 458–495; these read KDVS…NHPD, NITE…VNPE, VENQ…VSKK, DVIR…KRPE, RASE…KYPN, and DNAH…KRPK. The segment at 590–700 is disordered; the sequence is GLRNKEEEDE…NDLSFLGGGG (111 aa). Positions 596-609 are enriched in acidic residues; that stretch reads EEDEEEPDYVDDDN. Low complexity-rich tracts occupy residues 613–645 and 664–677; these read QQGG…QQQP and NNNN…NNNN. Over residues 678 to 693 the composition is skewed to polar residues; it reads MYSPQPQQFNGNSNDL.

The protein belongs to the adaptor complexes large subunit family. Adaptor protein complex 1 (AP-1) is a heterotetramer composed of two large adaptins (gamma-type subunit and beta-type subunit), a medium adaptin (mu-type subunit) and a small adaptin (sigma-type subunit).

It localises to the golgi apparatus. It is found in the trans-Golgi network. Its subcellular location is the cytoplasmic vesicle. The protein localises to the clathrin-coated vesicle membrane. Subunit of clathrin-associated adaptor protein complex 1 that plays a role in protein sorting in the trans-Golgi network (TGN) and endosomes. The AP complexes mediate the recruitment of clathrin to membranes and the recognition of sorting signals within the cytosolic tails of transmembrane cargo molecules. Also involved in early steps of phagocytosis and macropinocytosis. This Dictyostelium discoideum (Social amoeba) protein is AP-1 complex subunit beta (ap1b1).